A 310-amino-acid polypeptide reads, in one-letter code: Glycine--tRNA ligase alpha subunit (310 aa).

The protein belongs to the class-II aminoacyl-tRNA synthetase family. As to quaternary structure, tetramer of two alpha and two beta subunits.

It localises to the cytoplasm. The enzyme catalyses tRNA(Gly) + glycine + ATP = glycyl-tRNA(Gly) + AMP + diphosphate. This Agrobacterium fabrum (strain C58 / ATCC 33970) (Agrobacterium tumefaciens (strain C58)) protein is Glycine--tRNA ligase alpha subunit.